Consider the following 300-residue polypeptide: F-box/LRR-repeat protein 15 (300 aa).

Met-1 bears the N-acetylmethionine mark. In terms of domain architecture, F-box spans 19 to 66 (FLDLPWEDVLLPHVLNRVPLRQLLRLQRVSRAFRSLVQLHLAGLRRFD). An interaction with SMURF1 region spans residues 113-269 (NPQLRSVALG…ESSLSRLRKR (157 aa)). 5 LRR repeats span residues 141–162 (RLQR…RGLA), 167–188 (ALEE…VYLA), 194–215 (GLRS…QELA), 220–241 (ELHH…RTLA), and 246–267 (VLRS…SRLR).

The protein belongs to the FBXL15 family. Part of the SCF (SKP1-CUL1-F-box) E3 ubiquitin-protein ligase complex SCF(FBXL15) composed of CUL1, SKP1, RBX1 and FBXL15.

The protein localises to the cytoplasm. Its pathway is protein modification; protein ubiquitination. In terms of biological role, substrate recognition component of a SCF (SKP1-CUL1-F-box protein) E3 ubiquitin-protein ligase complex which mediates the ubiquitination and subsequent proteasomal degradation of SMURF1, thereby acting as a positive regulator of the BMP signaling pathway. Required for dorsal/ventral pattern formation and bone mass maintenance. Also mediates ubiquitination of SMURF2 and WWP2. The sequence is that of F-box/LRR-repeat protein 15 (FBXL15) from Homo sapiens (Human).